The sequence spans 395 residues: Demethylmacrocin O-methyltransferase (395 aa).

The enzyme catalyses demethylmacrocin + S-adenosyl-L-methionine = macrocin + S-adenosyl-L-homocysteine + H(+). The protein operates within antibiotic biosynthesis; tylosin biosynthesis. O-methyltransferase that catalyzes the conversion of demethylmacrocin to macrocin, the penultimate step of tylosin antibiotic biosynthesis. Also able to mediate the conversion of demethyllactenocin to lactenocin. This is Demethylmacrocin O-methyltransferase (tylE) from Streptomyces fradiae (Streptomyces roseoflavus).